Reading from the N-terminus, the 831-residue chain is Leucine--tRNA ligase (831 aa).

The 'HIGH' region motif lies at 36 to 46; it reads PYPSGKLHIGH. The short motif at 607–611 is the 'KMSKS' region element; sequence KMSKS. K610 lines the ATP pocket.

It belongs to the class-I aminoacyl-tRNA synthetase family.

The protein localises to the cytoplasm. It carries out the reaction tRNA(Leu) + L-leucine + ATP = L-leucyl-tRNA(Leu) + AMP + diphosphate. The polypeptide is Leucine--tRNA ligase (Neorickettsia sennetsu (strain ATCC VR-367 / Miyayama) (Ehrlichia sennetsu)).